The primary structure comprises 689 residues: MQNIEKINEEEAKKLLIELADKIAQYNHAYYIEDKPLVSDAEYDQLFNTNLKLEQKFPHLILENSPSKKIGAKVENKFAKVTHQVPMLSLSNVFDEEDVKDFLDRIKSFLRLDQFSPIFCEPKIDGLSFAATYKNGILTTGATRGDGYIGEDITANIKTIKDFPHKINNAPELLEVRGEIYIEKNDFTSLNQEQEQQGKDKFANPRNAAAGSLRQLDPSVTAKRPLKYFVYAIGSAKEELANSQDQLLAKFKELGFNVNEIGKLANSEEEIFSFYEYLKTNRKNLPYEIDGVVYKLNDFALQDRMGFIARSPRFATAHKFPAIIGQTKLLSITVQVGRTGTLTPVAELEPIEIGGVIVSRATLHNYQEIARKDVRVGDYVFLQRAGDVIPQITGVDLAKRSADATTFDPPLFCPSCNSKLHYVPEDIIIRCDNGLNCPAQNYERIRHFVSKNAMDIEGLGRKQVEFLIDKGLISNPYDIFFLKEKNEASLTKLENMDGWGKKSVENLFNNIEKSKNVSLPRFIYALGIRHIGEQNVKLLAREFGSYENFIAQMELLKENDPEIYQKLNNLDGIGDKMLVDIIDFFDVKENIELIKNLSEVLNIEDYKETREQSSLTGKIVVFTGSMPTLSRAEAKATAEKLGAKVAASVSSNTDLVIAGEDAGSKLKKAKELGIKIIDEAEWLTLVRDI.

NAD(+) is bound by residues 40–44 (DAEYD), 89–90 (SL), and E121. Residue K123 is the N6-AMP-lysine intermediate of the active site. Positions 144, 179, 295, and 319 each coordinate NAD(+). C413, C416, C431, and C437 together coordinate Zn(2+). Positions 610–689 (REQSSLTGKI…AEWLTLVRDI (80 aa)) constitute a BRCT domain.

It belongs to the NAD-dependent DNA ligase family. LigA subfamily. Mg(2+) serves as cofactor. Mn(2+) is required as a cofactor.

The enzyme catalyses NAD(+) + (deoxyribonucleotide)n-3'-hydroxyl + 5'-phospho-(deoxyribonucleotide)m = (deoxyribonucleotide)n+m + AMP + beta-nicotinamide D-nucleotide.. Its function is as follows. DNA ligase that catalyzes the formation of phosphodiester linkages between 5'-phosphoryl and 3'-hydroxyl groups in double-stranded DNA using NAD as a coenzyme and as the energy source for the reaction. It is essential for DNA replication and repair of damaged DNA. This Rickettsia bellii (strain OSU 85-389) protein is DNA ligase.